The primary structure comprises 2048 residues: Fanconi anemia group M protein (2048 aa).

A compositionally biased stretch (polar residues) spans 1–37 (MSGRQRTLFQTWGSSISRSSGTPGCSSGTERPQSPGS). The segment at 1 to 45 (MSGRQRTLFQTWGSSISRSSGTPGCSSGTERPQSPGSSKAPLPAA) is disordered. Serine 34 bears the Phosphoserine mark. The 169-residue stretch at 98–266 (ISRAALFCNT…QVITNLLIGQ (169 aa)) folds into the Helicase ATP-binding domain. 111–118 (LPTGLGKT) contributes to the ATP binding site. The DEAH box signature appears at 214–217 (DEAH). The 176-residue stretch at 452 to 627 (KLEEVVIEHF…VLHFYQRSPR (176 aa)) folds into the Helicase C-terminal domain. The interval 661–800 (SIFSYRDGMR…TSTFIAPRNE (140 aa)) is interaction with CENPS/CENPSX. 3 disordered regions span residues 1433 to 1476 (NVLN…NFPK), 1518 to 1540 (LSEEDAEYVSSDENDESENEQDS), and 1668 to 1809 (ILPD…HTSL). The segment covering 1518 to 1538 (LSEEDAEYVSSDENDESENEQ) has biased composition (acidic residues). Phosphoserine is present on residues serine 1673 and serine 1674. 3 stretches are compositionally biased toward polar residues: residues 1703-1745 (HCLN…ISEV), 1753-1767 (HNEVQSTTPPFTTVD), and 1786-1797 (EDSSTSGASCSK). The segment at 1727–2048 (LAKQSKQTSL…LNQDRLKSDI (322 aa)) is interaction with FAAP24.

Belongs to the DEAD box helicase family. DEAH subfamily. FANCM sub-subfamily. Component of the Fanconi anemia (FA) core complex, which consists of CENPS, CENPX, FANCA, FANCB, FANCC, FANCE, FANCF, FANCG, FANCL, FANCM, FAAP24 and FAAP100. The FA core complex associates with Bloom syndrome (BLM) complex, which consists of at least BLM, DNA topoisomerase 3-alpha/TOP3A, RMI1/BLAP75, RPA1/RPA70 and RPA2/RPA32. This supercomplex between FA and BLM complexes has been called BRAFT. Forms a discrete complex with CENPS and CENPX, called FANCM-MHF; this interaction stimulates DNA binding and replication fork remodeling by FANCM and stabilizes the binding partners. Forms a heterodimer with FAAP24; this interaction increases FANCM single-stranded DNA-binding activity. Phosphorylated; hyperphosphorylated in response to genotoxic stress. As to expression, expressed in germ cells of fetal and adult ovaries. In fetal ovaries, it is present in oogonia but expression is stronger in pachytene stage oocytes. Expressed in oocytes arrested at the diplotene stage of prophase I during the last trimester of pregnancy and in adults. Expressed in the testis.

It localises to the nucleus. It catalyses the reaction ATP + H2O = ADP + phosphate + H(+). DNA-dependent ATPase component of the Fanconi anemia (FA) core complex. Required for the normal activation of the FA pathway, leading to monoubiquitination of the FANCI-FANCD2 complex in response to DNA damage, cellular resistance to DNA cross-linking drugs, and prevention of chromosomal breakage. In complex with CENPS and CENPX, binds double-stranded DNA (dsDNA), fork-structured DNA (fsDNA) and Holliday junction substrates. Its ATP-dependent DNA branch migration activity can process branched DNA structures such as a movable replication fork. This activity is strongly stimulated in the presence of CENPS and CENPX. In complex with FAAP24, efficiently binds to single-strand DNA (ssDNA), splayed-arm DNA, and 3'-flap substrates. In vitro, on its own, strongly binds ssDNA oligomers and weakly fsDNA, but does not bind to dsDNA. The chain is Fanconi anemia group M protein (FANCM) from Homo sapiens (Human).